Consider the following 393-residue polypeptide: NAD(P)H-quinone oxidoreductase subunit H, chloroplastic (393 aa).

It belongs to the complex I 49 kDa subunit family. In terms of assembly, NDH is composed of at least 16 different subunits, 5 of which are encoded in the nucleus.

It localises to the plastid. It is found in the chloroplast thylakoid membrane. The catalysed reaction is a plastoquinone + NADH + (n+1) H(+)(in) = a plastoquinol + NAD(+) + n H(+)(out). It catalyses the reaction a plastoquinone + NADPH + (n+1) H(+)(in) = a plastoquinol + NADP(+) + n H(+)(out). Its function is as follows. NDH shuttles electrons from NAD(P)H:plastoquinone, via FMN and iron-sulfur (Fe-S) centers, to quinones in the photosynthetic chain and possibly in a chloroplast respiratory chain. The immediate electron acceptor for the enzyme in this species is believed to be plastoquinone. Couples the redox reaction to proton translocation, and thus conserves the redox energy in a proton gradient. This is NAD(P)H-quinone oxidoreductase subunit H, chloroplastic from Daucus carota (Wild carrot).